The chain runs to 404 residues: MLFSKSLVALVACFLPLIVSATELKLRNAAATNVAADSYIVVYKDIDDSTFESEMFNVHSFLSKRDSTFRGLGHKYKMPKFKGYQIESDMDTVNRISQSPHVAYVDKDVKVSAYDLSVRIGAPWGLDRISHRNGTSPGLEEYTYDSSAGGGTTIYIIDTGVYIEHVEFEGRATFGANFIPGSPDTDEDGHGTHVAGIAAGANFGVASKAKIIAVRVLDANGDGKGSNVLAGMQWAADDAGKKNQTAKSVINMSLGADYSEAFNKATEAIIAKGIVVVAAAGNEDANASGVSPASTVDAITVGATDRNDSRAAFSNWGVALDVFAPGVDILSAWIGGKDANKTISGTSMACPHVAGLAAYFIGLEKNGTSTPSKIATKIKGVATKNVVLHPKNSRDNLAYNDDGY.

The signal sequence occupies residues 1 to 20 (MLFSKSLVALVACFLPLIVS). Positions 21 to 114 (ATELKLRNAA…VDKDVKVSAY (94 aa)) are excised as a propeptide. Residues 38-112 (SYIVVYKDID…AYVDKDVKVS (75 aa)) form the Inhibitor I9 domain. The Peptidase S8 domain maps to 123–404 (PWGLDRISHR…DNLAYNDDGY (282 aa)). N-linked (GlcNAc...) asparagine glycosylation is present at N133. Active-site charge relay system residues include D158 and H190. N-linked (GlcNAc...) asparagine glycans are attached at residues N243, N251, N286, N307, and N340. S347 functions as the Charge relay system in the catalytic mechanism. Residue N366 is glycosylated (N-linked (GlcNAc...) asparagine).

It belongs to the peptidase S8 family.

The protein resides in the secreted. Its function is as follows. Secreted subtilisin-like serine endopeptidase. Mediates the degradation of collagen, the major structural protein in the mammalian host. Degrades the nonhelical regions of collagen that function in the cross-linking of the helical components. May function as virulence factor involved in epidermal wing necrosis observed in white nose syndrome (WNS) in bats. The protein is Subtilisin-like protease 3 of Pseudogymnoascus destructans (strain ATCC MYA-4855 / 20631-21) (Bat white-nose syndrome fungus).